Consider the following 776-residue polypeptide: MAAPGDPQDELLPLAGPGSQWLRHRGEGENEAVTPKGATPAPQAGEPSPGLGARAREAASREAGSGPARQSPVAMETASTGVAGVSSAMDHTFSTTSKDGEGSCYTSLISDICYPPQEDSTYFTGILQKENGHVTISESPEELGTPGPSLPDVPGIESRGLFSSDSGIEMTPAESTEVNKILADPLDQMKAEAYKYIDITRPEEVKHQEQHHPELEDKDLDFKNKDTDISIKPEGVREPDKPAPVEGKIIKDHLLEESTFAPYIDDLSEEQRRAPQITTPVKITLTEIEPSVETTTQEKTPEKQDICLKPSPDTVPTVTVSEPEDDSPGSITPPSSGTEPSAAESQGKGSISEDELITAIKEAKGLSYETAENPRPVGQLADRPEVKARSGPPTIPSPLDHEASSAESGDSEIELVSEDPMAAEDALPSGYVSFGHVGGPPPSPASPSIQYSILREEREAELDSELIIESCDASSASEESPKREQDSPPMKPSALDAIREETGVRAEERAPSRRGLAEPGSFLDYPSTEPQPGPELPPGDGALEPETPMLPRKPEEDSSSNQSPAATKGPGPLGPGAPPPLLFLNKQKAIDLLYWRDIKQTGIVFGSFLLLLFSLTQFSVVSVVAYLALAALSATISFRIYKSVLQAVQKTDEGHPFKAYLELEITLSQEQIQKYTDCLQFYVNSTLKELRRLFLVQDLVDSLKFAVLMWLLTYVGALFNGLTLLLMAVVSMFTLPVVYVKHQAQIDQYLGLVRTHINAVVAKIQAKIPGAKRHAE.

Disordered stretches follow at residues 1–101, 137–168, 205–245, and 285–580; these read MAAP…KDGE, SESP…DSGI, VKHQ…PAPV, and LTEI…APPP. Position 327 is a phosphoserine (Ser-327). Positions 328–341 are enriched in low complexity; that stretch reads PGSITPPSSGTEPS. Phosphoserine is present on residues Ser-350, Ser-352, and Ser-487. Basic and acidic residues predominate over residues 497-511; that stretch reads AIREETGVRAEERAP. The region spanning 589-776 is the Reticulon domain; sequence AIDLLYWRDI…KIPGAKRHAE (188 aa). The next 2 helical transmembrane spans lie at 603–623 and 705–725; these read IVFG…VVSV and FAVL…LTLL.

In terms of assembly, interacts with NDRG1. Interacts with BACE1. Interacts with TMEM33. As to quaternary structure, interacts with UGCG; regulates the ceramide glucosyltransferase activity of UGCG. Isoforms RTN1-A and RTN1-B are phosphorylated. In terms of tissue distribution, expressed in neural and neuroendocrine tissues and cell cultures derived therefrom. Expression of isoform RTN1-C is strongly correlated with neuronal differentiation.

Its subcellular location is the endoplasmic reticulum membrane. The protein localises to the golgi apparatus membrane. Functionally, inhibits amyloid precursor protein processing, probably by blocking BACE1 activity. The polypeptide is Reticulon-1 (RTN1) (Homo sapiens (Human)).